The primary structure comprises 305 residues: Glycine--tRNA ligase alpha subunit (305 aa).

This sequence belongs to the class-II aminoacyl-tRNA synthetase family. In terms of assembly, tetramer of two alpha and two beta subunits.

It localises to the cytoplasm. The catalysed reaction is tRNA(Gly) + glycine + ATP = glycyl-tRNA(Gly) + AMP + diphosphate. This chain is Glycine--tRNA ligase alpha subunit, found in Streptococcus pyogenes serotype M2 (strain MGAS10270).